The following is a 190-amino-acid chain: NADH-quinone oxidoreductase subunit B (190 aa).

[4Fe-4S] cluster contacts are provided by Cys39, Cys40, Cys104, and Cys135.

The protein belongs to the complex I 20 kDa subunit family. In terms of assembly, NDH-1 is composed of 14 different subunits. Subunits NuoB, C, D, E, F, and G constitute the peripheral sector of the complex. The cofactor is [4Fe-4S] cluster.

Its subcellular location is the cell inner membrane. The enzyme catalyses a quinone + NADH + 5 H(+)(in) = a quinol + NAD(+) + 4 H(+)(out). In terms of biological role, NDH-1 shuttles electrons from NADH, via FMN and iron-sulfur (Fe-S) centers, to quinones in the respiratory chain. The immediate electron acceptor for the enzyme in this species is believed to be a menaquinone. Couples the redox reaction to proton translocation (for every two electrons transferred, four hydrogen ions are translocated across the cytoplasmic membrane), and thus conserves the redox energy in a proton gradient. This chain is NADH-quinone oxidoreductase subunit B, found in Chlorobium chlorochromatii (strain CaD3).